A 988-amino-acid polypeptide reads, in one-letter code: uncharacterized protein (988 aa).

Residues methionine 1–leucine 17 form the signal peptide. Positions tyrosine 111–serine 176 are disordered. The segment covering proline 114–threonine 140 has biased composition (low complexity). Asparagine 247, asparagine 389, asparagine 529, and asparagine 601 each carry an N-linked (GlcNAc...) asparagine glycan. Residues isoleucine 690–leucine 710 traverse the membrane as a helical segment. A glycan (N-linked (GlcNAc...) asparagine) is linked at asparagine 720. A run of 6 helical transmembrane segments spans residues leucine 721–isoleucine 741, leucine 753–isoleucine 773, valine 784–leucine 804, methionine 832–leucine 852, leucine 864–isoleucine 884, and threonine 891–glycine 911. The interval arginine 966 to proline 988 is disordered. Asparagine 974 is a glycosylation site (N-linked (GlcNAc...) asparagine).

Its subcellular location is the membrane. This is an uncharacterized protein from Caenorhabditis elegans.